We begin with the raw amino-acid sequence, 287 residues long: Nucleotide-binding protein GM21_3387 (287 aa).

8 to 15 is an ATP binding site; that stretch reads GLSGSGKS. 59-62 provides a ligand contact to GTP; the sequence is DIRS.

This sequence belongs to the RapZ-like family.

Displays ATPase and GTPase activities. The polypeptide is Nucleotide-binding protein GM21_3387 (Geobacter sp. (strain M21)).